The sequence spans 488 residues: Ribulose bisphosphate carboxylase large chain (488 aa).

Substrate-binding residues include N128 and T178. Residue K180 is the Proton acceptor of the active site. K182 contributes to the substrate binding site. 3 residues coordinate Mg(2+): K206, D208, and E209. At K206 the chain carries N6-carboxylysine. Catalysis depends on H298, which acts as the Proton acceptor. R299, H331, and S383 together coordinate substrate.

This sequence belongs to the RuBisCO large chain family. Type I subfamily. In terms of assembly, heterohexadecamer of 8 large chains and 8 small chains. Mg(2+) is required as a cofactor.

It catalyses the reaction 2 (2R)-3-phosphoglycerate + 2 H(+) = D-ribulose 1,5-bisphosphate + CO2 + H2O. It carries out the reaction D-ribulose 1,5-bisphosphate + O2 = 2-phosphoglycolate + (2R)-3-phosphoglycerate + 2 H(+). RuBisCO catalyzes two reactions: the carboxylation of D-ribulose 1,5-bisphosphate, the primary event in carbon dioxide fixation, as well as the oxidative fragmentation of the pentose substrate. Both reactions occur simultaneously and in competition at the same active site. The sequence is that of Ribulose bisphosphate carboxylase large chain from Variovorax paradoxus (strain S110).